The chain runs to 108 residues: ATP synthase peripheral stalk subunit F6, mitochondrial (108 aa).

The transit peptide at 1–32 directs the protein to the mitochondrion; it reads MILQRLFRFSSVIRSAVSVHLRRNIGVTAVAF. 2 positions are modified to N6-acetyllysine: Lys-41 and Lys-46. The residue at position 65 (Ser-65) is a Phosphoserine. An N6-acetyllysine modification is found at Lys-79. 2 positions are modified to N6-acetyllysine; alternate: Lys-94 and Lys-99. N6-succinyllysine; alternate occurs at positions 94 and 99. N6-acetyllysine is present on Lys-105.

Belongs to the eukaryotic ATPase subunit F6 family. As to quaternary structure, component of the ATP synthase complex composed at least of ATP5F1A/subunit alpha, ATP5F1B/subunit beta, ATP5MC1/subunit c (homooctomer), MT-ATP6/subunit a, MT-ATP8/subunit 8, ATP5ME/subunit e, ATP5MF/subunit f, ATP5MG/subunit g, ATP5MK/subunit k, ATP5MJ/subunit j, ATP5F1C/subunit gamma, ATP5F1D/subunit delta, ATP5F1E/subunit epsilon, ATP5PF/subunit F6, ATP5PB/subunit b, ATP5PD/subunit d, ATP5PO/subunit OSCP. ATP synthase complex consists of a soluble F(1) head domain (subunits alpha(3) and beta(3)) - the catalytic core - and a membrane F(0) domain - the membrane proton channel (subunits c, a, 8, e, f, g, k and j). These two domains are linked by a central stalk (subunits gamma, delta, and epsilon) rotating inside the F1 region and a stationary peripheral stalk (subunits F6, b, d, and OSCP).

It is found in the mitochondrion. Its subcellular location is the mitochondrion inner membrane. Subunit F6, of the mitochondrial membrane ATP synthase complex (F(1)F(0) ATP synthase or Complex V) that produces ATP from ADP in the presence of a proton gradient across the membrane which is generated by electron transport complexes of the respiratory chain. ATP synthase complex consist of a soluble F(1) head domain - the catalytic core - and a membrane F(1) domain - the membrane proton channel. These two domains are linked by a central stalk rotating inside the F(1) region and a stationary peripheral stalk. During catalysis, ATP synthesis in the catalytic domain of F(1) is coupled via a rotary mechanism of the central stalk subunits to proton translocation. In vivo, can only synthesize ATP although its ATP hydrolase activity can be activated artificially in vitro. Part of the complex F(0) domain. Part of the complex F(0) domain and the peripheric stalk, which acts as a stator to hold the catalytic alpha(3)beta(3) subcomplex and subunit a/ATP6 static relative to the rotary elements. This chain is ATP synthase peripheral stalk subunit F6, mitochondrial, found in Homo sapiens (Human).